Consider the following 782-residue polypeptide: E3 UFM1-protein ligase 1 homolog (782 aa).

The disordered stretch occupies residues 404 to 478; the sequence is NVSTQELEDE…SRGGGGASKK (75 aa).

Belongs to the UFL1 family.

Functionally, E3 UFM1-protein ligase that mediates ufmylation of target proteins. The protein is E3 UFM1-protein ligase 1 homolog of Drosophila melanogaster (Fruit fly).